The chain runs to 355 residues: Probable butyrate kinase (355 aa).

The protein belongs to the acetokinase family.

The protein resides in the cytoplasm. It catalyses the reaction butanoate + ATP = butanoyl phosphate + ADP. The chain is Probable butyrate kinase from Clostridium botulinum (strain Alaska E43 / Type E3).